Consider the following 347-residue polypeptide: Probable arabinogalactan endo-beta-1,4-galactanase A (347 aa).

The first 16 residues, 1-16 (MLFSYLLATLPLLANA), serve as a signal peptide directing secretion. E150 serves as the catalytic Proton donor. E260 functions as the Nucleophile in the catalytic mechanism.

The protein belongs to the glycosyl hydrolase 53 family.

The protein localises to the secreted. The catalysed reaction is The enzyme specifically hydrolyzes (1-&gt;4)-beta-D-galactosidic linkages in type I arabinogalactans.. Endogalactanase involved in the degradation of plant cell wall polysaccharides, and more particularly of hairy regions of pectin. This chain is Probable arabinogalactan endo-beta-1,4-galactanase A (galA), found in Aspergillus flavus (strain ATCC 200026 / FGSC A1120 / IAM 13836 / NRRL 3357 / JCM 12722 / SRRC 167).